The sequence spans 141 residues: Oleosin 14.9 kDa (141 aa).

Residues methionine 1 to proline 22 show a composition bias toward basic and acidic residues. The disordered stretch occupies residues methionine 1–alanine 24. Residues methionine 1 to lysine 29 are polar. Residues alanine 30–serine 141 form a hydrophobic region. The next 3 membrane-spanning stretches (helical) occupy residues glycine 38–alanine 58, proline 60–isoleucine 80, and threonine 81–tyrosine 101.

This sequence belongs to the oleosin family.

The protein resides in the lipid droplet. The protein localises to the membrane. In terms of biological role, may have a structural role to stabilize the lipid body during desiccation of the seed by preventing coalescence of the oil. Probably interacts with both lipid and phospholipid moieties of lipid bodies. May also provide recognition signals for specific lipase anchorage in lipolysis during seedling growth. The chain is Oleosin 14.9 kDa (OL3) from Arabidopsis thaliana (Mouse-ear cress).